The sequence spans 164 residues: Crossover junction endodeoxyribonuclease RuvC (164 aa).

Catalysis depends on residues Asp-7, Glu-67, and Asp-139. Residues Asp-7, Glu-67, and Asp-139 each contribute to the Mg(2+) site.

This sequence belongs to the RuvC family. In terms of assembly, homodimer which binds Holliday junction (HJ) DNA. The HJ becomes 2-fold symmetrical on binding to RuvC with unstacked arms; it has a different conformation from HJ DNA in complex with RuvA. In the full resolvosome a probable DNA-RuvA(4)-RuvB(12)-RuvC(2) complex forms which resolves the HJ. Mg(2+) is required as a cofactor.

It is found in the cytoplasm. It catalyses the reaction Endonucleolytic cleavage at a junction such as a reciprocal single-stranded crossover between two homologous DNA duplexes (Holliday junction).. Its function is as follows. The RuvA-RuvB-RuvC complex processes Holliday junction (HJ) DNA during genetic recombination and DNA repair. Endonuclease that resolves HJ intermediates. Cleaves cruciform DNA by making single-stranded nicks across the HJ at symmetrical positions within the homologous arms, yielding a 5'-phosphate and a 3'-hydroxyl group; requires a central core of homology in the junction. The consensus cleavage sequence is 5'-(A/T)TT(C/G)-3'. Cleavage occurs on the 3'-side of the TT dinucleotide at the point of strand exchange. HJ branch migration catalyzed by RuvA-RuvB allows RuvC to scan DNA until it finds its consensus sequence, where it cleaves and resolves the cruciform DNA. The protein is Crossover junction endodeoxyribonuclease RuvC of Geobacter sulfurreducens (strain ATCC 51573 / DSM 12127 / PCA).